The primary structure comprises 118 residues: MARIAGINIPDQKHAVIALTAIYGIGKTRSKAILADVGIAEDVKISELTEEQIDQLRDGVAKYTVEGDLRREVSMNIKRLMDLGCYRGLRHRRSLPLRGQRTKTNARTRKGPRKPIKK.

The tract at residues 94–118 (SLPLRGQRTKTNARTRKGPRKPIKK) is disordered.

Belongs to the universal ribosomal protein uS13 family. As to quaternary structure, part of the 30S ribosomal subunit. Forms a loose heterodimer with protein S19. Forms two bridges to the 50S subunit in the 70S ribosome.

Functionally, located at the top of the head of the 30S subunit, it contacts several helices of the 16S rRNA. In the 70S ribosome it contacts the 23S rRNA (bridge B1a) and protein L5 of the 50S subunit (bridge B1b), connecting the 2 subunits; these bridges are implicated in subunit movement. Contacts the tRNAs in the A and P-sites. The sequence is that of Small ribosomal subunit protein uS13 from Vibrio vulnificus (strain CMCP6).